Consider the following 94-residue polypeptide: MLRLDLQFFASKKGVGSTKNGRDSESKRLGAKRADGQFVTGGSILYRQRGTKIYPGENVGRGGDDTLFAKIDGAVKFERFGRDRKKVSVYPVAQ.

The propeptide occupies Met-1–Phe-9.

It belongs to the bacterial ribosomal protein bL27 family. Post-translationally, the N-terminus is cleaved by ribosomal processing cysteine protease Prp.

The sequence is that of Large ribosomal subunit protein bL27 from Bacillus velezensis (strain DSM 23117 / BGSC 10A6 / LMG 26770 / FZB42) (Bacillus amyloliquefaciens subsp. plantarum).